We begin with the raw amino-acid sequence, 106 residues long: N(4)-acetylcytidine amidohydrolase (106 aa).

The ASCH domain occupies 9 to 105 (TFFEFLTPLI…ELYVIEYELI (97 aa)). Lys-23 acts as the Proton acceptor in catalysis. Residue Thr-26 is the Nucleophile of the active site. The active-site Proton donor is Glu-76.

It belongs to the N(4)-acetylcytidine amidohydrolase family.

It carries out the reaction N(4)-acetylcytidine + H2O = cytidine + acetate + H(+). The catalysed reaction is N(4)-acetyl-2'-deoxycytidine + H2O = 2'-deoxycytidine + acetate + H(+). It catalyses the reaction N(4)-acetylcytosine + H2O = cytosine + acetate + H(+). Functionally, catalyzes the hydrolysis of N(4)-acetylcytidine (ac4C). The chain is N(4)-acetylcytidine amidohydrolase from Vibrio campbellii (strain ATCC BAA-1116).